A 143-amino-acid polypeptide reads, in one-letter code: uncharacterized protein (143 aa).

A helical transmembrane segment spans residues 65–85 (LVWMLVGTIVLSLDIIFPALV).

It localises to the membrane. This is an uncharacterized protein from Saccharomyces cerevisiae (strain ATCC 204508 / S288c) (Baker's yeast).